Here is a 475-residue protein sequence, read N- to C-terminus: Tubulin gamma chain (475 aa).

142 to 148 (AGGTGSG) contributes to the GTP binding site. The interval 455–475 (GKQVSGEGNTSGTVDSRVGAS) is disordered.

It belongs to the tubulin family.

The protein resides in the cytoplasm. Its subcellular location is the cytoskeleton. It localises to the microtubule organizing center. In terms of biological role, tubulin is the major constituent of microtubules. The gamma chain is found at microtubule organizing centers (MTOC) such as the spindle poles, suggesting that it is involved in the minus-end nucleation of microtubule assembly. This chain is Tubulin gamma chain (TUBG1), found in Physcomitrium patens (Spreading-leaved earth moss).